A 344-amino-acid chain; its full sequence is Anthranilate phosphoribosyltransferase (344 aa).

5-phospho-alpha-D-ribose 1-diphosphate contacts are provided by residues G84, G87–D88, T92, N94–T97, K112–S120, and S124. G84 serves as a coordination point for anthranilate. Position 96 (S96) interacts with Mg(2+). Residue R170 participates in anthranilate binding. D229 and E230 together coordinate Mg(2+).

Belongs to the anthranilate phosphoribosyltransferase family. Homodimer. Mg(2+) serves as cofactor.

The catalysed reaction is N-(5-phospho-beta-D-ribosyl)anthranilate + diphosphate = 5-phospho-alpha-D-ribose 1-diphosphate + anthranilate. It functions in the pathway amino-acid biosynthesis; L-tryptophan biosynthesis; L-tryptophan from chorismate: step 2/5. Functionally, catalyzes the transfer of the phosphoribosyl group of 5-phosphorylribose-1-pyrophosphate (PRPP) to anthranilate to yield N-(5'-phosphoribosyl)-anthranilate (PRA). The protein is Anthranilate phosphoribosyltransferase of Janthinobacterium sp. (strain Marseille) (Minibacterium massiliensis).